The following is a 289-amino-acid chain: MSIQAKKLNYTYQIGTPLEHIALKDVSINIKDGSYTAIVGHTGSGKSTLLQHLNGLLKPTSGEISINGYTIDNTTKNKELGKLRKEVGFVFQFPEAQLFEETVLKDIAFAPKNFGKSEDEAEKIAREKAKLVALPEEVLEKSPFELSGGQMRRVAIAGILAMEPKVLVLDEPTAGLDPEGRHQMMEMFNRLHKDENLTIILVTHQMNDVAEYADHVIVLESGKVIADSTPKELFSDPEWLKNHHLNLPQTTDFAYKLFDKLALSKHSLPLKSEELTDEILKILGGNLNE.

One can recognise an ABC transporter domain in the interval 3–246 (IQAKKLNYTY…PEWLKNHHLN (244 aa)). 40–47 (GHTGSGKS) contacts ATP.

Belongs to the ABC transporter superfamily. Energy-coupling factor EcfA family. As to quaternary structure, forms a stable energy-coupling factor (ECF) transporter complex composed of 2 membrane-embedded substrate-binding proteins (S component), 2 ATP-binding proteins (A component) and 2 transmembrane proteins (T component).

The protein localises to the cell membrane. ATP-binding (A) component of a common energy-coupling factor (ECF) ABC-transporter complex. Unlike classic ABC transporters this ECF transporter provides the energy necessary to transport a number of different substrates. The protein is Energy-coupling factor transporter ATP-binding protein EcfA2 of Ligilactobacillus salivarius (strain UCC118) (Lactobacillus salivarius).